The primary structure comprises 248 residues: NAD kinase (248 aa).

Asp45 serves as the catalytic Proton acceptor. NAD(+) is bound by residues 45-46 (DG), Arg50, 110-111 (NE), and Asp138.

The protein belongs to the NAD kinase family. It depends on a divalent metal cation as a cofactor.

The protein resides in the cytoplasm. The catalysed reaction is NAD(+) + ATP = ADP + NADP(+) + H(+). Involved in the regulation of the intracellular balance of NAD and NADP, and is a key enzyme in the biosynthesis of NADP. Catalyzes specifically the phosphorylation on 2'-hydroxyl of the adenosine moiety of NAD to yield NADP. The polypeptide is NAD kinase (Sulfurisphaera tokodaii (strain DSM 16993 / JCM 10545 / NBRC 100140 / 7) (Sulfolobus tokodaii)).